The chain runs to 170 residues: Ribulose bisphosphate carboxylase small subunit, chloroplastic (170 aa).

2 transit peptides (chloroplast) span residues 1–46 (MAPT…GRIR) and 1–47 (MAPT…RIRC).

This sequence belongs to the RuBisCO small chain family. Heterohexadecamer of 8 large and 8 small subunits.

The protein localises to the plastid. It localises to the chloroplast. In terms of biological role, ruBisCO catalyzes two reactions: the carboxylation of D-ribulose 1,5-bisphosphate, the primary event in carbon dioxide fixation, as well as the oxidative fragmentation of the pentose substrate. Both reactions occur simultaneously and in competition at the same active site. Although the small subunit is not catalytic it is essential for maximal activity. The chain is Ribulose bisphosphate carboxylase small subunit, chloroplastic from Zea mays (Maize).